Here is a 555-residue protein sequence, read N- to C-terminus: Hydroxylamine reductase (555 aa).

[4Fe-4S] cluster-binding residues include C5, C8, C17, and C23. H248, E272, C316, C408, C436, C461, E496, and K498 together coordinate hybrid [4Fe-2O-2S] cluster. C408 carries the cysteine persulfide modification.

The protein belongs to the HCP family. Requires [4Fe-4S] cluster as cofactor. The cofactor is hybrid [4Fe-2O-2S] cluster.

Its subcellular location is the cytoplasm. It catalyses the reaction A + NH4(+) + H2O = hydroxylamine + AH2 + H(+). In terms of biological role, catalyzes the reduction of hydroxylamine to form NH(3) and H(2)O. The sequence is that of Hydroxylamine reductase from Natranaerobius thermophilus (strain ATCC BAA-1301 / DSM 18059 / JW/NM-WN-LF).